We begin with the raw amino-acid sequence, 294 residues long: N-acetylmuramic acid 6-phosphate etherase (294 aa).

Residues 56-219 (TSYSLRNGGR…STLSMVSVGK (164 aa)) form the SIS domain. Glu84 acts as the Proton donor in catalysis. Glu115 is an active-site residue.

The protein belongs to the GCKR-like family. MurNAc-6-P etherase subfamily. In terms of assembly, homodimer.

The enzyme catalyses N-acetyl-D-muramate 6-phosphate + H2O = N-acetyl-D-glucosamine 6-phosphate + (R)-lactate. The protein operates within amino-sugar metabolism; 1,6-anhydro-N-acetylmuramate degradation. It functions in the pathway amino-sugar metabolism; N-acetylmuramate degradation. It participates in cell wall biogenesis; peptidoglycan recycling. Its function is as follows. Specifically catalyzes the cleavage of the D-lactyl ether substituent of MurNAc 6-phosphate, producing GlcNAc 6-phosphate and D-lactate. Together with AnmK, is also required for the utilization of anhydro-N-acetylmuramic acid (anhMurNAc) either imported from the medium or derived from its own cell wall murein, and thus plays a role in cell wall recycling. This Francisella tularensis subsp. tularensis (strain SCHU S4 / Schu 4) protein is N-acetylmuramic acid 6-phosphate etherase.